Reading from the N-terminus, the 231-residue chain is 7-cyano-7-deazaguanine synthase (231 aa).

Phe8–Leu18 serves as a coordination point for ATP. The Zn(2+) site is built by Cys188, Cys197, Cys200, and Cys203.

Belongs to the QueC family. Requires Zn(2+) as cofactor.

It carries out the reaction 7-carboxy-7-deazaguanine + NH4(+) + ATP = 7-cyano-7-deazaguanine + ADP + phosphate + H2O + H(+). It functions in the pathway purine metabolism; 7-cyano-7-deazaguanine biosynthesis. In terms of biological role, catalyzes the ATP-dependent conversion of 7-carboxy-7-deazaguanine (CDG) to 7-cyano-7-deazaguanine (preQ(0)). This chain is 7-cyano-7-deazaguanine synthase, found in Salmonella agona (strain SL483).